The sequence spans 374 residues: Actin-related protein 2/3 complex subunit 2B (374 aa).

It belongs to the ARPC2 family. In terms of assembly, component of the Arp2/3 complex composed of ARP2, ARP3, ARPC1/p41-ARC, ARPC2/p34-ARC, ARPC3/p21-ARC, ARPC4/p20-ARC and ARPC5/p16-ARC. In terms of tissue distribution, expressed at low levels in all tissues with a relatively highest expression in inflorescences.

The protein resides in the cytoplasm. Its subcellular location is the cytoskeleton. It is found in the cell projection. In terms of biological role, functions as actin-binding component of the Arp2/3 complex which is involved in regulation of actin polymerization and together with an activating nucleation-promoting factor (NPF) mediates the formation of branched actin networks. Seems to contact the mother actin filament. Arp2/3 complex plays a critical role in the control of cell morphogenesis via the modulation of cell polarity development. The protein is Actin-related protein 2/3 complex subunit 2B (ARPC2B) of Arabidopsis thaliana (Mouse-ear cress).